Reading from the N-terminus, the 367-residue chain is Queuine tRNA-ribosyltransferase (367 aa).

The active-site Proton acceptor is aspartate 89. Residues 89-93, aspartate 143, glutamine 187, and glycine 214 each bind substrate; that span reads DSGGF. The interval 245–251 is RNA binding; sequence GVGTPAD. Aspartate 264 serves as the catalytic Nucleophile. The segment at 269-273 is RNA binding; important for wobble base 34 recognition; sequence TRNAR. Residues cysteine 302, cysteine 304, cysteine 307, and histidine 333 each contribute to the Zn(2+) site.

The protein belongs to the queuine tRNA-ribosyltransferase family. In terms of assembly, homodimer. Within each dimer, one monomer is responsible for RNA recognition and catalysis, while the other monomer binds to the replacement base PreQ1. Zn(2+) serves as cofactor.

The catalysed reaction is 7-aminomethyl-7-carbaguanine + guanosine(34) in tRNA = 7-aminomethyl-7-carbaguanosine(34) in tRNA + guanine. The protein operates within tRNA modification; tRNA-queuosine biosynthesis. Functionally, catalyzes the base-exchange of a guanine (G) residue with the queuine precursor 7-aminomethyl-7-deazaguanine (PreQ1) at position 34 (anticodon wobble position) in tRNAs with GU(N) anticodons (tRNA-Asp, -Asn, -His and -Tyr). Catalysis occurs through a double-displacement mechanism. The nucleophile active site attacks the C1' of nucleotide 34 to detach the guanine base from the RNA, forming a covalent enzyme-RNA intermediate. The proton acceptor active site deprotonates the incoming PreQ1, allowing a nucleophilic attack on the C1' of the ribose to form the product. After dissociation, two additional enzymatic reactions on the tRNA convert PreQ1 to queuine (Q), resulting in the hypermodified nucleoside queuosine (7-(((4,5-cis-dihydroxy-2-cyclopenten-1-yl)amino)methyl)-7-deazaguanosine). The sequence is that of Queuine tRNA-ribosyltransferase from Nitrosospira multiformis (strain ATCC 25196 / NCIMB 11849 / C 71).